A 304-amino-acid polypeptide reads, in one-letter code: Heme A synthase (304 aa).

Residues 1-8 (MFNKRNLK) lie on the Cytoplasmic side of the membrane. The chain crosses the membrane as a helical span at residues 9–29 (WLSVLATIIMAFVQLGGALVT). Over 30–67 (KTGSEDGCGSSWPLCHGALLPQNLPIDTIIELSHRAVS) the chain is Extracellular. The cysteines at positions 37 and 44 are disulfide-linked. Glu60 is a catalytic residue. His63 lines the heme o pocket. A helical membrane pass occupies residues 68 to 88 (GLSLIVVLWLAITAWKHIGYI). The Cytoplasmic segment spans residues 89–93 (REVKP). Residues 94–114 (LAIISIAFLLVQALIGAAAVI) traverse the membrane as a helical segment. The Extracellular segment spans residues 115 to 123 (WQQNSYVLA). Residues 124 to 144 (LHFGISLISFSSVFVLMLIIF) form a helical membrane-spanning segment. Residue His125 coordinates heme o. Topologically, residues 145-163 (EVDKKYEADELYIRKPLRR) are cytoplasmic. The chain crosses the membrane as a helical span at residues 164–184 (LTWIMTGIVYLTIYTGALVRH). The Extracellular portion of the chain corresponds to 185 to 215 (AKASLAYGGWPLPFHDIIPHTEQDWVQFAHR). His214 serves as a coordination point for heme b. The helical transmembrane segment at 216-236 (GMAFITFFWIMITFIHAVKNY) threads the bilayer. Residues 237-244 (SENRTIRY) are Cytoplasmic-facing. The helical transmembrane segment at 245–265 (GYTTAFILIILQVITGALSVM) threads the bilayer. The Extracellular segment spans residues 266 to 270 (TNVNL). A helical membrane pass occupies residues 271–291 (FIALLHALFITILFGMIAYFI). A heme b-binding site is contributed by His276. Over 292 to 304 (MLMLRTIRSEKIK) the chain is Cytoplasmic.

This sequence belongs to the COX15/CtaA family. Type 1 subfamily. As to quaternary structure, interacts with CtaB. Heme b is required as a cofactor.

The protein localises to the cell membrane. The catalysed reaction is Fe(II)-heme o + 2 A + H2O = Fe(II)-heme a + 2 AH2. It functions in the pathway porphyrin-containing compound metabolism; heme A biosynthesis; heme A from heme O: step 1/1. In terms of biological role, catalyzes the conversion of heme O to heme A by two successive hydroxylations of the methyl group at C8. The first hydroxylation forms heme I, the second hydroxylation results in an unstable dihydroxymethyl group, which spontaneously dehydrates, resulting in the formyl group of heme A. This is Heme A synthase from Staphylococcus haemolyticus (strain JCSC1435).